The following is a 276-amino-acid chain: Large ribosomal subunit protein uL2 (276 aa).

Positions 212 to 276 are disordered; sequence NRHRGIRPQT…KLIISRKKHK (65 aa). Residues 257–276 are compositionally biased toward basic residues; that stretch reads YKTRKKKASDKLIISRKKHK.

The protein belongs to the universal ribosomal protein uL2 family. In terms of assembly, part of the 50S ribosomal subunit. Forms a bridge to the 30S subunit in the 70S ribosome.

Its function is as follows. One of the primary rRNA binding proteins. Required for association of the 30S and 50S subunits to form the 70S ribosome, for tRNA binding and peptide bond formation. It has been suggested to have peptidyltransferase activity; this is somewhat controversial. Makes several contacts with the 16S rRNA in the 70S ribosome. This is Large ribosomal subunit protein uL2 from Helicobacter pylori (strain HPAG1).